The following is a 317-amino-acid chain: Curved DNA-binding protein (317 aa).

The region spanning Asp-5–Arg-69 is the J domain.

It localises to the cytoplasm. Its subcellular location is the nucleoid. Its function is as follows. DNA-binding protein that preferentially recognizes a curved DNA sequence. It is probably a functional analog of DnaJ; displays overlapping activities with DnaJ, but functions under different conditions, probably acting as a molecular chaperone in an adaptive response to environmental stresses other than heat shock. Lacks autonomous chaperone activity; binds native substrates and targets them for recognition by DnaK. Its activity is inhibited by the binding of CbpM. The protein is Curved DNA-binding protein of Pseudomonas putida (strain W619).